The chain runs to 97 residues: Large ribosomal subunit protein bL28 (97 aa).

This sequence belongs to the bacterial ribosomal protein bL28 family.

The chain is Large ribosomal subunit protein bL28 from Brucella ovis (strain ATCC 25840 / 63/290 / NCTC 10512).